Consider the following 565-residue polypeptide: Probable alpha-L-arabinofuranosidase A (565 aa).

The N-terminal stretch at 1–19 is a signal peptide; the sequence is MPLSAAIKSSLSVSVRADA. N-linked (GlcNAc...) asparagine glycans are attached at residues Asn71, Asn91, Asn128, Asn303, Asn362, Asn486, and Asn501.

This sequence belongs to the glycosyl hydrolase 51 family.

The protein localises to the secreted. The enzyme catalyses Hydrolysis of terminal non-reducing alpha-L-arabinofuranoside residues in alpha-L-arabinosides.. Its pathway is glycan metabolism; L-arabinan degradation. Its function is as follows. Alpha-L-arabinofuranosidase involved in the degradation of arabinoxylan, a major component of plant hemicellulose. Acts only on small linear 1,5-alpha-linked L-arabinofuranosyl oligosaccharides. The sequence is that of Probable alpha-L-arabinofuranosidase A (abfA) from Emericella nidulans (strain FGSC A4 / ATCC 38163 / CBS 112.46 / NRRL 194 / M139) (Aspergillus nidulans).